The following is a 574-amino-acid chain: MSRRLIYVLNINRESTHKIQENEIYTYFSHCNIDHTSTELDFVVKNYDLNRRQPVTGYTALHCYLYNNYFTNDVLKILLNHGVDVTMKTSSGRMPVYILLTRCCNISHDVVIDMIDKDKNHLSHRDYSNLLLEYIKSRYMLLKEEDIDENIVSTLLDKGIDPNFKQDGYTALHYYYLCLAHVYKPGECRKPITIKKAKRIISLFIQHGANLNALDNCGNTPFHLYLSIEMCNNIHMTKMLLTFNPNFKICNNHGLTPILCYITSDYIQHDILVMLIHHYETNVGEMPIDERRIIVFEFIKTYSTRPADSITYLMNRFKNIDIYTRYEGKTLLHVACEYNNTHVIDYLIRINGDINALTDNNKHATQLIIDNKENSPYTINCLLYILRYIVDKNVIRSLVDQLPSLPIFDIKSFEKFISYCILLDDTFYNRHVRNRNSKTYRYAFSKYMSFDKYDGIITKCHKETILLKLSTVLDTTLYAVLRCHNSKKLRRYLNELKKYNNDKSFKIYSNIMNERYLNVYYKDMYVSKVYDKLFPVFTDKNCLLTLLPSEIIYEILYMLTINDLYNISYPPTKV.

ANK repeat units follow at residues 56-87, 135-164, 167-213, 217-249, 253-285, and 327-356; these read TGYT…DVTM, IKSR…DPNF, DGYT…NLNA, CGNT…NFKI, HGLT…NVGE, and EGKT…DINA. One can recognise an F-box domain in the interval 541–574; the sequence is NCLLTLLPSEIIYEILYMLTINDLYNISYPPTKV.

This is Ankyrin repeat protein B18 from Vaccinia virus (strain Ankara) (VACV).